Here is a 1775-residue protein sequence, read N- to C-terminus: Atrochrysone carboxylic acid synthase (1775 aa).

Residues 35–262 (LRRLQALSKD…YAKWASLPIF (228 aa)) form the Starter acyltransferase (SAT) domain. The Ketosynthase family 3 (KS3) domain occupies 400–833 (DSKIAIVGMS…GGNTTMLLEE (434 aa)). Residues C573, H708, and H750 each act as for beta-ketoacyl synthase activity in the active site. One can recognise a Malonyl-CoA:ACP transacylase (MAT) domain in the interval 934-1244 (FAFTGQGAFY…ENNWNTLADS (311 aa)). Residues 1313-1631 (TSSIHQVLQE…RSLLPTFFSP (319 aa)) form a product template (PT) domain region. The interval 1317–1451 (HQVLQEDVTG…SAVVEYGDAN (135 aa)) is N-terminal hotdog fold. Residues 1317-1626 (HQVLQEDVTG…FRRFPRSLLP (310 aa)) form the PKS/mFAS DH domain. H1349 functions as the Proton acceptor; for dehydratase activity in the catalytic mechanism. Positions 1480 to 1626 (AAVLPRNMAY…FRRFPRSLLP (147 aa)) are C-terminal hotdog fold. D1537 functions as the Proton donor; for dehydratase activity in the catalytic mechanism. The tract at residues 1671–1697 (TAAPVPAPAPVPAKRAEPAPAAAQAAA) is disordered. Residues 1688-1697 (PAPAAAQAAA) are compositionally biased toward low complexity. A Carrier domain is found at 1697 to 1774 (ATQNPTITGA…ELKTYIEETF (78 aa)). S1734 carries the O-(pantetheine 4'-phosphoryl)serine modification.

The enzyme catalyses holo-[ACP] + 8 malonyl-CoA + 8 H(+) = atrochrysone carboxyl-[ACP] + 8 CO2 + 8 CoA + 2 H2O. The protein operates within secondary metabolite biosynthesis. Functionally, non-reducing polyketide synthase; part of the gene cluster that mediates the biosynthesis of physcion, a natural anthraquinone fungicide that can prevent plant fungal infections. The pathway begins with the polyketide synthase AcPKS that condenses 8 malonyl-CoA units to synthesize atrochrysone thioester which is released from the synthase by the atrochrysone carboxyl ACP thioesterase AcTE that breaks the thioester bond and leads to free atrochrysone carboxylic acid. Spontaneous decarboxylation of atrochrysone carboxylic acid leads to the formation of atrochrysone. Then, atrochrysone undergoes spontaneous dehydration and oxidation, giving the products emodin anthrone and emodin. The O-methyltransferase AcOMT then methylates the C-6 hydroxyl of emodin to form physcion. This is Atrochrysone carboxylic acid synthase from Aspergillus chevalieri (Eurotium chevalieri).